A 377-amino-acid polypeptide reads, in one-letter code: Protein-tyrosine sulfotransferase 2 (377 aa).

The Cytoplasmic segment spans residues 1 to 8 (MRLSVRRV). The chain crosses the membrane as a helical; Signal-anchor for type II membrane protein span at residues 9-25 (LLAAGCALVLVLAVQLG). The Lumenal portion of the chain corresponds to 26–377 (QQVLECRAVL…NSTSSHLGSS (352 aa)). 78-82 (RSGTT) contributes to the 3'-phosphoadenylyl sulfate binding site. Cysteines 96 and 156 form a disulfide. Catalysis depends on Glu-99, which acts as the Proton donor/acceptor. The tract at residues 101 to 105 (RIIPR) is interaction with peptide substrate. 3'-phosphoadenylyl sulfate contacts are provided by Arg-183, Ser-191, and Arg-195. An intrachain disulfide couples Cys-225 to Cys-233. Residues Tyr-238, 285–294 (STDQVIKPVN), and Lys-300 each bind 3'-phosphoadenylyl sulfate. Residues Asn-343 and Asn-368 are each glycosylated (N-linked (GlcNAc...) asparagine).

Belongs to the protein sulfotransferase family. Homodimer. Can also form heterodimers with TPST1. In terms of processing, N-glycosylated. As to expression, widely expressed.

It localises to the golgi apparatus membrane. It catalyses the reaction L-tyrosyl-[protein] + 3'-phosphoadenylyl sulfate = O-sulfo-L-tyrosine-[protein] + adenosine 3',5'-bisphosphate + H(+). Functionally, catalyzes the O-sulfation of tyrosine residues within acidic motifs of polypeptides, using 3'-phosphoadenylyl sulfate (PAPS) as cosubstrate. The sequence is that of Protein-tyrosine sulfotransferase 2 (TPST2) from Homo sapiens (Human).